A 173-amino-acid polypeptide reads, in one-letter code: Translation initiation factor IF-3 (173 aa).

The protein belongs to the IF-3 family. Monomer.

The protein resides in the cytoplasm. Functionally, IF-3 binds to the 30S ribosomal subunit and shifts the equilibrium between 70S ribosomes and their 50S and 30S subunits in favor of the free subunits, thus enhancing the availability of 30S subunits on which protein synthesis initiation begins. The protein is Translation initiation factor IF-3 of Bacillus subtilis (strain 168).